A 244-amino-acid chain; its full sequence is MNIDLNADLGEGCASDSELLTLVSSANIACGFHAGDAQTMLTCVREALKNGVAIGAHPSFPDRDNFGRTAMVLPPETVYAQTLYQIGALGAIVQAQGGVMRHVKPHGMLYNQAAKDPHLAQAIAKAVHDYDPSLILVGLAGSELIRAGERHRLVTRQEVFADRGYQADGSLVPRTQPGALIHDEEQALAQTLDMVQAGRVKSVTGVWTTVTAQTVCIHGDGEYALAFARRLRAAFNARNIHVIA.

Belongs to the LamB/PxpA family. Forms a complex composed of PxpA, PxpB and PxpC.

The enzyme catalyses 5-oxo-L-proline + ATP + 2 H2O = L-glutamate + ADP + phosphate + H(+). Its function is as follows. Catalyzes the cleavage of 5-oxoproline to form L-glutamate coupled to the hydrolysis of ATP to ADP and inorganic phosphate. The polypeptide is 5-oxoprolinase subunit A (Salmonella agona (strain SL483)).